A 458-amino-acid polypeptide reads, in one-letter code: PH domain-containing protein DDB_G0274775 (458 aa).

Residues P15–D112 enclose the PH domain. A disordered region spans residues L111–R154. The span at I124–G142 shows a compositional bias: polar residues. Low complexity predominate over residues S143–R154.

The sequence is that of PH domain-containing protein DDB_G0274775 from Dictyostelium discoideum (Social amoeba).